Consider the following 450-residue polypeptide: Chromosomal replication initiator protein DnaA (450 aa).

Residues 1–84 form a domain I, interacts with DnaA modulators region; that stretch reads MTENEQIFWN…AVDYVYEEDL (84 aa). A domain II region spans residues 84-109; it reads LIIEQQHQGQQGYTEQAFQQLPAVQS. Residues 110–328 form a domain III, AAA+ region region; the sequence is DLNPKYSFDN…GALKDISLVA (219 aa). Residues Gly-154, Gly-156, Lys-157, and Thr-158 each coordinate ATP. A domain IV, binds dsDNA region spans residues 329–450; that stretch reads NFKQIDTITV…EIETIKNKIK (122 aa).

Belongs to the DnaA family. As to quaternary structure, oligomerizes as a right-handed, spiral filament on DNA at oriC.

Its subcellular location is the cytoplasm. Functionally, plays an essential role in the initiation and regulation of chromosomal replication. ATP-DnaA binds to the origin of replication (oriC) to initiate formation of the DNA replication initiation complex once per cell cycle. Binds the DnaA box (a 9 base pair repeat at the origin) and separates the double-stranded (ds)DNA. Forms a right-handed helical filament on oriC DNA; dsDNA binds to the exterior of the filament while single-stranded (ss)DNA is stabiized in the filament's interior. The ATP-DnaA-oriC complex binds and stabilizes one strand of the AT-rich DNA unwinding element (DUE), permitting loading of DNA polymerase. After initiation quickly degrades to an ADP-DnaA complex that is not apt for DNA replication. Binds acidic phospholipids. This is Chromosomal replication initiator protein DnaA from Streptococcus equi subsp. zooepidemicus (strain MGCS10565).